The following is a 313-amino-acid chain: Aspartate carbamoyltransferase catalytic subunit (313 aa).

Carbamoyl phosphate contacts are provided by arginine 58 and threonine 59. Position 86 (lysine 86) interacts with L-aspartate. Carbamoyl phosphate contacts are provided by arginine 108, histidine 136, and glutamine 139. 2 residues coordinate L-aspartate: arginine 169 and arginine 223. Positions 264 and 265 each coordinate carbamoyl phosphate.

This sequence belongs to the aspartate/ornithine carbamoyltransferase superfamily. ATCase family. Heterododecamer (2C3:3R2) of six catalytic PyrB chains organized as two trimers (C3), and six regulatory PyrI chains organized as three dimers (R2).

The catalysed reaction is carbamoyl phosphate + L-aspartate = N-carbamoyl-L-aspartate + phosphate + H(+). It participates in pyrimidine metabolism; UMP biosynthesis via de novo pathway; (S)-dihydroorotate from bicarbonate: step 2/3. Catalyzes the condensation of carbamoyl phosphate and aspartate to form carbamoyl aspartate and inorganic phosphate, the committed step in the de novo pyrimidine nucleotide biosynthesis pathway. The chain is Aspartate carbamoyltransferase catalytic subunit from Chlorobium luteolum (strain DSM 273 / BCRC 81028 / 2530) (Pelodictyon luteolum).